The chain runs to 695 residues: Probable pre-mRNA-splicing factor ATP-dependent RNA helicase DEAH9 (695 aa).

A Helicase ATP-binding domain is found at 58–223 (LYLVENHATT…FNSSKKRHAP (166 aa)). 71–78 (GETGSGKT) provides a ligand contact to ATP. The short motif at 170 to 173 (DEAH) is the DEAH box element. The Helicase C-terminal domain maps to 261-438 (SVVSTILLIN…STVIQLKALG (178 aa)).

It belongs to the DEAD box helicase family. DEAH subfamily. DDX35 sub-subfamily.

The enzyme catalyses ATP + H2O = ADP + phosphate + H(+). May be involved in pre-mRNA splicing. The polypeptide is Probable pre-mRNA-splicing factor ATP-dependent RNA helicase DEAH9 (Arabidopsis thaliana (Mouse-ear cress)).